The following is a 259-amino-acid chain: Protein odd-skipped-related 1 (259 aa).

C2H2-type zinc fingers lie at residues 168–190 (FVCK…ERTH), 196–218 (YTCD…RYIH), and 224–246 (FKCQ…KTLH).

This sequence belongs to the Odd C2H2-type zinc-finger protein family.

Its subcellular location is the nucleus. In terms of biological role, transcriptional repressor. Required for pronephric kidney development. The chain is Protein odd-skipped-related 1 from Xenopus tropicalis (Western clawed frog).